The following is a 261-amino-acid chain: Ribosomal RNA large subunit methyltransferase E (261 aa).

Gly81, Trp83, Asp104, Asp120, and Asp144 together coordinate S-adenosyl-L-methionine. Residue Lys184 is the Proton acceptor of the active site. The disordered stretch occupies residues 233–261 (GNALGHEVEDDGPMPHDPREDATADEDQD). A compositionally biased stretch (basic and acidic residues) spans 245–254 (PMPHDPREDA).

It belongs to the class I-like SAM-binding methyltransferase superfamily. RNA methyltransferase RlmE family.

Its subcellular location is the cytoplasm. It catalyses the reaction uridine(2552) in 23S rRNA + S-adenosyl-L-methionine = 2'-O-methyluridine(2552) in 23S rRNA + S-adenosyl-L-homocysteine + H(+). Its function is as follows. Specifically methylates the uridine in position 2552 of 23S rRNA at the 2'-O position of the ribose in the fully assembled 50S ribosomal subunit. The chain is Ribosomal RNA large subunit methyltransferase E from Allorhizobium ampelinum (strain ATCC BAA-846 / DSM 112012 / S4) (Agrobacterium vitis (strain S4)).